We begin with the raw amino-acid sequence, 536 residues long: Putative beta-xylosidase (536 aa).

The Proton acceptor role is filled by aspartate 14. Glutamate 186 acts as the Proton donor in catalysis.

The protein belongs to the glycosyl hydrolase 43 family.

The enzyme catalyses Hydrolysis of (1-&gt;4)-beta-D-xylans, to remove successive D-xylose residues from the non-reducing termini.. This Escherichia coli (strain K12) protein is Putative beta-xylosidase (yagH).